A 990-amino-acid chain; its full sequence is Serine/threonine-protein phosphatase 6 regulatory ankyrin repeat subunit B (990 aa).

ANK repeat units follow at residues 7-36, 40-69, 73-102, 106-135, 139-168, 172-201, 205-234, 238-267, 271-301, 305-334, 338-367, 371-400, 404-433, 437-466, 470-499, 531-560, 566-595, 599-628, 633-662, 666-695, 699-728, 732-761, 768-797, 800-829, 835-864, 868-898, 902-931, and 938-967; these read ADQP…DVNA, EKRT…RVNA, MWLT…DVNA, NWQT…SVNV, GGRT…NINA, KDRR…EVTC, KGYT…EIDE, YGNT…NVNQ, NGFT…DVNI, DGKS…EIDC, DGNT…DTAK, HNMF…EIDT, FGRT…DFNK, RGRT…NINE, WGRT…NAEE, EGYN…NMFE, ATKS…DLDI, KGRT…SVTV, TKRT…NPDV, KGQT…SVDA, LGCT…SILC, RGRT…SEED, QGYT…FRKF, NSFS…ASIV, KGRT…QVNA, AGKT…DLTL, DSNT…EQSL, and SLQT…CVLA.

Protein phosphatase 6 (PP6) holoenzyme is proposed to be a heterotrimeric complex formed by the catalytic subunit, a SAPS domain-containing subunit (PP6R) and an ankyrin repeat-domain containing regulatory subunit (ARS).

Its function is as follows. Putative regulatory subunit of protein phosphatase 6 (PP6) that may be involved in the recognition of phosphoprotein substrates. The polypeptide is Serine/threonine-protein phosphatase 6 regulatory ankyrin repeat subunit B (ANKRD44) (Gallus gallus (Chicken)).